A 308-amino-acid chain; its full sequence is MKTRKHYIDYFDSLITKHRDYQKGHREVINNILRDFLDYIGWENHICKDTQNAYSHSLGSLLEWFKRSRLLSSVIAVNNVKKFMYPSYIETNVSNDNVVTFNIINDVKRTYLEEWFSKDSKEKFASEFSHEFNNNVNMLFKHSRRLFCHGDDRTINVNVKDWVTAKFIPSSQNGPFELLIIVCAPHEIYKNLPYMKPCEANKHNKTIRSLTYKLRTLLSKMDVVESFDDNTNYGLSLFETKVVIKLKDPNKFKPTPKPNHGNDTMKEEREYLSTRLIEVEKQIEEHTKVLKDLTAKANGLRNAIEVLK.

This is an uncharacterized protein from Escherichia coli (Bacteriophage T4).